Consider the following 314-residue polypeptide: MKKKIAEYEVGEQVDIFLLIKTATKGIASNGKPFLTVILQDPSGDIEAKLWDVSPEVEKQYVAETIVKVAGDILNYKGRIQLRVKQIRVANENEVTDISDFVEKAPVKKEDMVEKITQYIFEMRNPNIQRLTRHLLNKHQNEFLDYPAATKNHHEFVSGLAYHVVSMLDLAKAISNLYPSLDKDLLYAGVILHDLGKVIELSGPISTTYTLEGNLLGHISIMVNEIGKAADELQIDAEEVLILQHIVLSHHGKAEWGSPKPPLVKEAEILHYIDNLDAKMNMMDRALGRTKPGEYTERVFALDNRSFYKPSFHN.

An HD domain is found at 163–279 (HVVSMLDLAK…LHYIDNLDAK (117 aa)).

Belongs to the YhaM family.

Functionally, shows a 3'-5' exoribonuclease activity. The protein is 3'-5' exoribonuclease YhaM of Bacillus thuringiensis (strain Al Hakam).